The sequence spans 122 residues: ATP synthase epsilon chain (122 aa).

It belongs to the ATPase epsilon chain family. As to quaternary structure, F-type ATPases have 2 components, CF(1) - the catalytic core - and CF(0) - the membrane proton channel. CF(1) has five subunits: alpha(3), beta(3), gamma(1), delta(1), epsilon(1). CF(0) has three main subunits: a, b and c.

It localises to the cell membrane. In terms of biological role, produces ATP from ADP in the presence of a proton gradient across the membrane. The sequence is that of ATP synthase epsilon chain from Rhodococcus erythropolis (strain PR4 / NBRC 100887).